Here is a 542-residue protein sequence, read N- to C-terminus: Glucans biosynthesis protein G (542 aa).

Positions 1 to 34 are cleaved as a signal peptide; it reads MVSLLRCPSSKPYSSLICSLTLGAVVALSGVAYA.

It belongs to the OpgD/OpgG family.

The protein localises to the periplasm. It participates in glycan metabolism; osmoregulated periplasmic glucan (OPG) biosynthesis. Functionally, involved in the biosynthesis of osmoregulated periplasmic glucans (OPGs). The polypeptide is Glucans biosynthesis protein G (Shewanella baltica (strain OS155 / ATCC BAA-1091)).